The primary structure comprises 734 residues: MTEENSSITAETVASHGLSPEEYDTIKQALGRTPNLVELGIFSAMWSEHCSYKSSRKHLRELPTTGSQVICGPGENAGVVDIGDGQAAIFKMESHNHPSYIEPYQGAATGVGGILRDVFTMGARPVANLNALRFGSPKHPKTPHLVSGVVAGIGGYGNCVGVPTVGGEVNFHPAYDGNNLVNAMTVGVAETNKIFYSAASGAGNPIVYVGSKTGRDGIHGATMASADFGKDAEEKRPTVQVGDPFSEKLLIEACLELMASDAIVAIQDMGAAGLTSSAVEMASKGEVGIELDMDMVPCREEGMTPYEMMLSESQERMLMVLKPGREAEAEAIFKKWELDFAIIGRVTDSKHMVLTWKGDIVCDIPLAPLADNAPCYDRPWVATPKAKALGAVPASGSITDNLVTLVGSPDLASRRWIWEQYDNMVGADTVQCPGGDAAVVRVHGTEKALAMSVDVTPRYCRADPEEGGKQAVAECYRNITAVGALPLASTDCLNFGNPERPEIMGQIVGAIKGIGEACRALDMPIVSGNVSLYNETRQDDGSSLAILPTPTIGGVGLLQDWRDSTTIAFKNTGEEIYLVGNSGQGHLGQSIWLREIAGREEGTAPSVDLAQEKATGDFIRAMIQDGMLCAVHDISDGGLAVALAEMALAGNIGATVEAHDKAIAEHAYYFGEDQGRYLVSSTNAVALVSAAEKAGIPVFRLGVTGGDAVVLNSQSVSLEKLRKSHEAFLPELMQ.

The active site involves histidine 49. Residues tyrosine 52 and lysine 91 each contribute to the ATP site. Position 93 (glutamate 93) interacts with Mg(2+). Substrate contacts are provided by residues 94 to 97 (SHNH) and arginine 116. Histidine 95 acts as the Proton acceptor in catalysis. A Mg(2+)-binding site is contributed by aspartate 117. Substrate is bound at residue glutamine 240. Aspartate 268 provides a ligand contact to Mg(2+). Residue 312–314 (ESQ) participates in substrate binding. 2 residues coordinate ATP: aspartate 491 and glycine 528. Mg(2+) is bound at residue asparagine 529. Substrate is bound at residue serine 531.

Belongs to the FGAMS family. Monomer. Part of the FGAM synthase complex composed of 1 PurL, 1 PurQ and 2 PurS subunits.

The protein resides in the cytoplasm. It catalyses the reaction N(2)-formyl-N(1)-(5-phospho-beta-D-ribosyl)glycinamide + L-glutamine + ATP + H2O = 2-formamido-N(1)-(5-O-phospho-beta-D-ribosyl)acetamidine + L-glutamate + ADP + phosphate + H(+). It participates in purine metabolism; IMP biosynthesis via de novo pathway; 5-amino-1-(5-phospho-D-ribosyl)imidazole from N(2)-formyl-N(1)-(5-phospho-D-ribosyl)glycinamide: step 1/2. In terms of biological role, part of the phosphoribosylformylglycinamidine synthase complex involved in the purines biosynthetic pathway. Catalyzes the ATP-dependent conversion of formylglycinamide ribonucleotide (FGAR) and glutamine to yield formylglycinamidine ribonucleotide (FGAM) and glutamate. The FGAM synthase complex is composed of three subunits. PurQ produces an ammonia molecule by converting glutamine to glutamate. PurL transfers the ammonia molecule to FGAR to form FGAM in an ATP-dependent manner. PurS interacts with PurQ and PurL and is thought to assist in the transfer of the ammonia molecule from PurQ to PurL. The chain is Phosphoribosylformylglycinamidine synthase subunit PurL from Zymomonas mobilis subsp. mobilis (strain ATCC 31821 / ZM4 / CP4).